We begin with the raw amino-acid sequence, 275 residues long: 2,3,4,5-tetrahydropyridine-2,6-dicarboxylate N-succinyltransferase (275 aa).

Residues arginine 107 and aspartate 144 each coordinate substrate.

This sequence belongs to the transferase hexapeptide repeat family. As to quaternary structure, homotrimer.

The protein localises to the cytoplasm. It carries out the reaction (S)-2,3,4,5-tetrahydrodipicolinate + succinyl-CoA + H2O = (S)-2-succinylamino-6-oxoheptanedioate + CoA. It functions in the pathway amino-acid biosynthesis; L-lysine biosynthesis via DAP pathway; LL-2,6-diaminopimelate from (S)-tetrahydrodipicolinate (succinylase route): step 1/3. The polypeptide is 2,3,4,5-tetrahydropyridine-2,6-dicarboxylate N-succinyltransferase (Polynucleobacter asymbioticus (strain DSM 18221 / CIP 109841 / QLW-P1DMWA-1) (Polynucleobacter necessarius subsp. asymbioticus)).